The sequence spans 267 residues: Aspartate/glutamate leucyltransferase (267 aa).

The segment at 246-267 is disordered; it reads EQEEQTRPLFRPSATGFSTGQE.

It belongs to the R-transferase family. Bpt subfamily.

It is found in the cytoplasm. It carries out the reaction N-terminal L-glutamyl-[protein] + L-leucyl-tRNA(Leu) = N-terminal L-leucyl-L-glutamyl-[protein] + tRNA(Leu) + H(+). The catalysed reaction is N-terminal L-aspartyl-[protein] + L-leucyl-tRNA(Leu) = N-terminal L-leucyl-L-aspartyl-[protein] + tRNA(Leu) + H(+). In terms of biological role, functions in the N-end rule pathway of protein degradation where it conjugates Leu from its aminoacyl-tRNA to the N-termini of proteins containing an N-terminal aspartate or glutamate. The sequence is that of Aspartate/glutamate leucyltransferase from Granulibacter bethesdensis (strain ATCC BAA-1260 / CGDNIH1).